A 262-amino-acid polypeptide reads, in one-letter code: Large ribosomal subunit protein bL9m (262 aa).

A mitochondrion-targeting transit peptide spans 1–49 (MAASMAPRCSSLLWAGAAWLRQRGIGELLQPRIERSTPGRDFSLSHYQS).

Belongs to the bacterial ribosomal protein bL9 family. Component of the mitochondrial ribosome large subunit (39S) which comprises a 16S rRNA and about 50 distinct proteins.

It is found in the mitochondrion. The sequence is that of Large ribosomal subunit protein bL9m (Mrpl9) from Rattus norvegicus (Rat).